A 378-amino-acid chain; its full sequence is Cytochrome b (378 aa).

Helical transmembrane passes span 34 to 54, 78 to 100, 113 to 133, and 179 to 199; these read FGSL…FLSM, WLLR…CHIG, TWNV…VGYV, and FFSF…VHLL. Heme b is bound by residues H84 and H98. The heme b site is built by H183 and H197. An a ubiquinone-binding site is contributed by H202. 4 helical membrane-spanning segments follow: residues 225–245, 289–306, 313–342, and 350–369; these read YSTK…IVVL, LGGV…FCLP, KFRS…WIGM, and IFIG…LNPL.

It belongs to the cytochrome b family. The main subunits of complex b-c1 are: cytochrome b, cytochrome c1 and the Rieske protein. The cofactor is heme b.

It is found in the mitochondrion inner membrane. In terms of biological role, component of the ubiquinol-cytochrome c reductase complex (complex III or cytochrome b-c1 complex) that is part of the mitochondrial respiratory chain. The b-c1 complex mediates electron transfer from ubiquinol to cytochrome c. Contributes to the generation of a proton gradient across the mitochondrial membrane that is then used for ATP synthesis. The polypeptide is Cytochrome b (mt:Cyt-b) (Loxocorone allax (Goblet worm)).